We begin with the raw amino-acid sequence, 230 residues long: Enolase-phosphatase E1 (230 aa).

This sequence belongs to the HAD-like hydrolase superfamily. MasA/MtnC family. Monomer. Mg(2+) serves as cofactor.

The catalysed reaction is 5-methylsulfanyl-2,3-dioxopentyl phosphate + H2O = 1,2-dihydroxy-5-(methylsulfanyl)pent-1-en-3-one + phosphate. Its pathway is amino-acid biosynthesis; L-methionine biosynthesis via salvage pathway; L-methionine from S-methyl-5-thio-alpha-D-ribose 1-phosphate: step 3/6. The protein operates within amino-acid biosynthesis; L-methionine biosynthesis via salvage pathway; L-methionine from S-methyl-5-thio-alpha-D-ribose 1-phosphate: step 4/6. Functionally, bifunctional enzyme that catalyzes the enolization of 2,3-diketo-5-methylthiopentyl-1-phosphate (DK-MTP-1-P) into the intermediate 2-hydroxy-3-keto-5-methylthiopentenyl-1-phosphate (HK-MTPenyl-1-P), which is then dephosphorylated to form the acireductone 1,2-dihydroxy-3-keto-5-methylthiopentene (DHK-MTPene). The polypeptide is Enolase-phosphatase E1 (Sulfurihydrogenibium sp. (strain YO3AOP1)).